The primary structure comprises 492 residues: Ethanolamine-phosphate phospho-lyase (492 aa).

At lysine 280 the chain carries N6-(pyridoxal phosphate)lysine. The interval 462–492 is disordered; the sequence is ASDENGLVHPSNGNSHKHTSTIPLSKKTKRN.

The protein belongs to the class-III pyridoxal-phosphate-dependent aminotransferase family. Homotetramer. Pyridoxal 5'-phosphate is required as a cofactor.

Its subcellular location is the mitochondrion. It carries out the reaction phosphoethanolamine + H2O = acetaldehyde + NH4(+) + phosphate. In terms of biological role, catalyzes the pyridoxal-phosphate-dependent breakdown of phosphoethanolamine, converting it to ammonia, inorganic phosphate and acetaldehyde. This chain is Ethanolamine-phosphate phospho-lyase (etnppl), found in Danio rerio (Zebrafish).